Reading from the N-terminus, the 142-residue chain is Galectin-16 (142 aa).

Positions 6–138 (VPYKLPVSLS…DVSLDSVLVN (133 aa)) constitute a Galectin domain.

Predominantly and highly expressed in the placenta where it is localized mainly in the syncytiotrophoblast and in the endothelia of fetal vessels. Also detected in the amnion and chorionic trophoblasts in fetal membranes.

Binds lactose with high affinity. Strong inducer of T-cell apoptosis. The polypeptide is Galectin-16 (Homo sapiens (Human)).